The primary structure comprises 375 residues: Actin, cytoplasmic (375 aa).

The protein belongs to the actin family.

Its subcellular location is the cytoplasm. The protein resides in the cytoskeleton. The catalysed reaction is ATP + H2O = ADP + phosphate + H(+). In terms of biological role, actins are highly conserved proteins that are involved in various types of cell motility and are ubiquitously expressed in all eukaryotic cells. In Oxytricha trifallax (Sterkiella histriomuscorum), this protein is Actin, cytoplasmic.